A 367-amino-acid chain; its full sequence is Homoserine O-acetyltransferase (367 aa).

The 307-residue stretch at 44-350 (NAILVTHAWT…AYGHDAFLLE (307 aa)) folds into the AB hydrolase-1 domain. The active-site Nucleophile is the serine 150. Residue arginine 217 participates in substrate binding. Catalysis depends on residues aspartate 311 and histidine 344. Aspartate 345 is a binding site for substrate.

Belongs to the AB hydrolase superfamily. MetX family. In terms of assembly, homodimer.

The protein localises to the cytoplasm. The enzyme catalyses L-homoserine + acetyl-CoA = O-acetyl-L-homoserine + CoA. The protein operates within amino-acid biosynthesis; L-methionine biosynthesis via de novo pathway; O-acetyl-L-homoserine from L-homoserine: step 1/1. Its function is as follows. Transfers an acetyl group from acetyl-CoA to L-homoserine, forming acetyl-L-homoserine. This Citrifermentans bemidjiense (strain ATCC BAA-1014 / DSM 16622 / JCM 12645 / Bem) (Geobacter bemidjiensis) protein is Homoserine O-acetyltransferase.